The sequence spans 472 residues: Cell division protein FtsP (472 aa).

Positions 1 to 27 form a signal peptide, tat-type signal; it reads MSLSRRQFIQASGIALCAGAMPLTARA.

It belongs to the FtsP family. Predicted to be exported by the Tat system. The position of the signal peptide cleavage has not been experimentally proven.

The protein localises to the periplasm. Cell division protein that is required for growth during stress conditions. May be involved in protecting or stabilizing the divisomal assembly under conditions of stress. This chain is Cell division protein FtsP, found in Dickeya dadantii (strain 3937) (Erwinia chrysanthemi (strain 3937)).